The following is a 458-amino-acid chain: MAHEKLWGGRFSEPTDQFVEEFTASIDFDKRLYHQDIRGSIAHARMLGKQGILPMAEVEKIVAGLQEVLARIEAGKFDFSVALEDIHMNIEARLTEKIGEAGKRLHTGRSRNDQVALDIRLYLRDEIVEISAYLDMLVDSLIYQAEANLGVIMPGYTHLQTAQPILFSHHMMAYVEMFTRDKGRMEDCLRRMNVLPLGAGALAGTTFPIDREHVAELLDFPGVTRNSLDSVSDRDFALEFMGASSILMMHLSRFSEELILWSTSEFKFVELTDSFCTGSSIMPQKKNPDVPELVRGKTGRVYGNLMALLTVMKALPLAYNKDMQEDKEPLFDTIDTVKGSLKIFADMVREMRINAGNMRAAAAKGFSTATDVADYLVRQGMPFRDAHEVVGKTVAYCIANGKDLPDLTMDEWQGFSDKIGEDIFDAITLEASVNARVATGGTALERVKAEIERAKVGR.

The protein belongs to the lyase 1 family. Argininosuccinate lyase subfamily.

Its subcellular location is the cytoplasm. It carries out the reaction 2-(N(omega)-L-arginino)succinate = fumarate + L-arginine. The protein operates within amino-acid biosynthesis; L-arginine biosynthesis; L-arginine from L-ornithine and carbamoyl phosphate: step 3/3. This chain is Argininosuccinate lyase, found in Geobacter sulfurreducens (strain ATCC 51573 / DSM 12127 / PCA).